Reading from the N-terminus, the 135-residue chain is Large ribosomal subunit protein uL16c (135 aa).

It belongs to the universal ribosomal protein uL16 family. As to quaternary structure, part of the 50S ribosomal subunit.

The protein resides in the plastid. It is found in the chloroplast. This chain is Large ribosomal subunit protein uL16c, found in Daucus carota (Wild carrot).